We begin with the raw amino-acid sequence, 936 residues long: MAGENSDNEPSSPASPSSAGFNTDQLPISTSQNSENFSDEEEAAVDTQVIRDEPDEAEDEEEEEGEDLFNDTFMNDYRKMDENDQYESNGIDDSVDDERDLGQAMLDRRAADADLDARENRLANRKLPHLLHDNDSDDWNYRPSKRSRTTVPPRGNGGDPDGNPPSSPGVSQPDISMTDQTDDYQDEDDNDDEAEFEMYRIQGTLREWVMRDEVRRFIAKKFKDFLLTYVKPKNENGDIEYVRLINEMVSANKCSLEIDYKEFIHVHPNIAIWLADAPQPVLEVMEEVSEKVIFDLHPNYKNIHTKIYVRVTNLPVNDQIRNIRQIHLNTMIRIGGVVTRRSGVFPQLQQVKYDCNKCGAVLGPFFQNSYSEVKVGSCSECQSKGPFTVNVEQTIYRNYQKLTIQESPGTVPAGRLPRHKEVILLNDLIDCARPGEEIEVTGIYTNNFDLSLNTKNGFPVFATVVEANYVTKKQDLFSAYKLTQEDKTQIEELSKDPRIVERIIKSIAPSIYGHEDIKTALALAMFGGQEKNIKGKHRLRGDINVLLLGDPGTAKSQFLKYVEKTGQRAVYTTGKGASAVGLTAAVHKDPVTREWTLEGGALVLADRGICLIDEFDKMNDQDRVSIHEAMEQQSISISKAGIVTSLQARCSVIAAANPVGGRYDSSKSFAQNVELTDPILSRFDILCVVKDVVDPVTDEMLAEFVVNSHFKSQPKGGKMEDSDPEDGIQGSSGSTDPEVLPQNLLKKYLTYSKLYVFPKLGELDAKKLETVYANLRRESMNGQGVSIATRHLESMIRMSEAHARMHLRQYVTEEDVNMAIRVLLDSFISTQKFGVQRTLRESFKRYITYKKDFNSLLLVLLKELVKNALKFEEIISGSNSGLPTIEVKIEELQTKAKEYDIADLRPFFSSTDFSKAHFELDHGRGMIKCPKRLITW.

Disordered stretches follow at residues 1-105 (MAGE…GQAM) and 126-190 (KLPH…EDDN). Residues 10–19 (PSSPASPSSA) show a composition bias toward low complexity. Polar residues predominate over residues 20-36 (GFNTDQLPISTSQNSEN). Composition is skewed to acidic residues over residues 53–69 (EPDE…EDLF) and 180–190 (QTDDYQDEDDN). Residues 355–381 (CNKCGAVLGPFFQNSYSEVKVGSCSEC) form a C4-type zinc finger. The region spanning 499-705 (IVERIIKSIA…VTDEMLAEFV (207 aa)) is the MCM domain. ATP is bound at residue 549–556 (GDPGTAKS). Residues 681-684 (SRFD) carry the Arginine finger motif. Positions 711-739 (KSQPKGGKMEDSDPEDGIQGSSGSTDPEV) are disordered.

The protein belongs to the MCM family. Component of the minichromosome maintenance (MCM) complex, a heterotetramer composed of MCM2, MCM3, MCM4, MCM5, MCM6 and MCM7. Interacts with ETG1 and the replication-associated protein of the geminivirus mungbean yellow mosaic virus (MYMV). In terms of tissue distribution, expressed in root apical meristem, lateral root meristem primordia, leaf primordia, shoot apical meristem and flower buds.

Its subcellular location is the nucleus. The enzyme catalyses ATP + H2O = ADP + phosphate + H(+). Probable component of the MCM2-7 complex (MCM complex) that may function as a DNA helicase and which is essential to undergo a single round of replication initiation and elongation per cell cycle in eukaryotic cells. May play a crucial role in the control of de-differentiation and cell proliferation processes required for lateral root formation. Is essential for embryo development. Is involved in the geminivirus mungbean yellow mosaic virus (MYMV) DNA replication, presumably in conjunction with other host factors. This is DNA replication licensing factor MCM2 (MCM2) from Arabidopsis thaliana (Mouse-ear cress).